The following is a 219-amino-acid chain: Agamous-like MADS-box protein AGL19 (219 aa).

Residues 1-61 (MVRGKTEMKR…SKLYEFSSSS (61 aa)) enclose the MADS-box domain. The disordered stretch occupies residues 77–96 (GNNHKRNDNSQQARDETSGL). Residues 86–176 (SQQARDETSG…KEKWLGMGTA (91 aa)) enclose the K-box domain.

Interacts with SOC1 and AGL21. Mostly expressed in the outer layers of the root meristem (lateral root cap and epidermis) and in the central cylinder cells of mature roots. Also present in rosette leaves and seedlings and, to a lesser extent, in cauline leaves and flowers. Enriched in apices including the shoot apical meristem and developing leaf primordia.

The protein localises to the nucleus. Probable transcription factor that promotes flowering, especially in response to vernalization by short periods of cold, in an FLC-inpedendent manner. The chain is Agamous-like MADS-box protein AGL19 (AGL19) from Arabidopsis thaliana (Mouse-ear cress).